A 615-amino-acid polypeptide reads, in one-letter code: Probable transporter mch1 (615 aa).

Positions 1 to 35 (MTGSIGQAPAIDKRDFDINRRSSTPHETAAQEDEA) are disordered. Positions 11 to 20 (IDKRDFDINR) are enriched in basic and acidic residues. The chain crosses the membrane as a helical span at residues 84 to 104 (FVWGVITCLGAGSITAFSLYG). Residue Asn-112 is glycosylated (N-linked (GlcNAc...) asparagine). 5 consecutive transmembrane segments (helical) span residues 120 to 140 (EVSIAAGISMYLPVSLAGYLC), 147 to 167 (PLTLFAGIAFGLGYSLAAFVY), 182 to 202 (FWVMVVAFIAIGVATCSMYLA), 218 to 238 (GIILAVPIAAFGLSGMWQSQV), and 261 to 281 (FLFLAILLLTIGVIGTFALRI). Asn-329 carries an N-linked (GlcNAc...) asparagine glycan. 6 helical membrane-spanning segments follow: residues 371 to 391 (IFLADHTMWWLALGFFLVTGP), 428 to 448 (IIALTSTIARLLTGSLSDLFA), 477 to 497 (LAFLIPSALLLSLGFLLLASP), 512 to 532 (LVGLGYGSIFSLVPIIISVVW), 538 to 558 (GTNWGIVAMFPAAGAAMWGVI), and 583 to 603 (FGFWSIGCTFSVWVAIVAWLV).

Belongs to the major facilitator superfamily.

Its subcellular location is the vacuole membrane. Its function is as follows. Probable transporter. This Emericella nidulans (strain FGSC A4 / ATCC 38163 / CBS 112.46 / NRRL 194 / M139) (Aspergillus nidulans) protein is Probable transporter mch1 (mch1).